Here is a 698-residue protein sequence, read N- to C-terminus: Serine/threonine-protein kinase Nek8 (698 aa).

Residues 4 to 258 (YERIRVVGRG…LSHIMAQPLC (255 aa)) enclose the Protein kinase domain. Residues 10 to 18 (VGRGAFGIV) and Lys-33 contribute to the ATP site. The Proton acceptor role is filled by Asp-128. Thr-162 carries the phosphothreonine; by autocatalysis modification. Residues 278–309 (EKSLTPGPPIASGSTGSRATSARCRGVPRGPV) form a disordered region. The span at 288 to 309 (ASGSTGSRATSARCRGVPRGPV) shows a compositional bias: low complexity. RCC1 repeat units follow at residues 416 to 467 (GIIM…LSTD), 468 to 519 (GELF…LTSP), 520 to 585 (GRVL…ITAS), 586 to 637 (GDCY…VGAE), and 638 to 690 (GEVY…AVRS).

The protein belongs to the protein kinase superfamily. NEK Ser/Thr protein kinase family. NIMA subfamily. As to quaternary structure, interacts with PKD2; may regulate PKD2 targeting to the cilium. Interacts with ANKS6. Component of a complex containing at least ANKS6, INVS, NEK8 and NPHP3. ANKS6 may organize complex assembly by linking INVS and NPHP3 to NEK8 and INVS may target the complex to the proximal ciliary axoneme. Interacts with ANKS3. It depends on Mg(2+) as a cofactor. Kidney, liver, and testis.

It is found in the cytoplasm. Its subcellular location is the cytoskeleton. The protein resides in the cell projection. The protein localises to the cilium. It localises to the microtubule organizing center. It is found in the centrosome. Its subcellular location is the cilium axoneme. It catalyses the reaction L-seryl-[protein] + ATP = O-phospho-L-seryl-[protein] + ADP + H(+). The catalysed reaction is L-threonyl-[protein] + ATP = O-phospho-L-threonyl-[protein] + ADP + H(+). Its function is as follows. Required for renal tubular integrity. May regulate local cytoskeletal structure in kidney tubule epithelial cells. May regulate ciliary biogenesis through targeting of proteins to the cilia. Plays a role in organogenesis and is involved in the regulation of the Hippo signaling pathway. This chain is Serine/threonine-protein kinase Nek8 (Nek8), found in Mus musculus (Mouse).